Here is a 152-residue protein sequence, read N- to C-terminus: Nucleoside diphosphate kinase (152 aa).

The ATP site is built by K11, F59, R87, T93, R104, and N114. Catalysis depends on H117, which acts as the Pros-phosphohistidine intermediate.

Belongs to the NDK family. As to quaternary structure, homotetramer. Requires Mg(2+) as cofactor.

Its subcellular location is the cytoplasm. The enzyme catalyses a 2'-deoxyribonucleoside 5'-diphosphate + ATP = a 2'-deoxyribonucleoside 5'-triphosphate + ADP. The catalysed reaction is a ribonucleoside 5'-diphosphate + ATP = a ribonucleoside 5'-triphosphate + ADP. In terms of biological role, major role in the synthesis of nucleoside triphosphates other than ATP. The ATP gamma phosphate is transferred to the NDP beta phosphate via a ping-pong mechanism, using a phosphorylated active-site intermediate. The sequence is that of Nucleoside diphosphate kinase from Prochlorococcus marinus (strain AS9601).